A 379-amino-acid polypeptide reads, in one-letter code: S-adenosylmethionine decarboxylase proenzyme (379 aa).

Active-site residues include glutamate 30 and glutamate 33. Serine 96 functions as the Schiff-base intermediate with substrate; via pyruvic acid in the catalytic mechanism. Serine 96 carries the post-translational modification Pyruvic acid (Ser); by autocatalysis. Residue cysteine 110 is the Proton donor; for catalytic activity of the active site. Catalysis depends on proton acceptor; for processing activity residues serine 254 and histidine 267.

It belongs to the eukaryotic AdoMetDC family. As to quaternary structure, heterotetramer of two alpha and two beta chains. The cofactor is pyruvate. Is synthesized initially as an inactive proenzyme. Formation of the active enzyme involves a self-maturation process in which the active site pyruvoyl group is generated from an internal serine residue via an autocatalytic post-translational modification. Two non-identical subunits are generated from the proenzyme in this reaction, and the pyruvate is formed at the N-terminus of the alpha chain, which is derived from the carboxyl end of the proenzyme. The post-translation cleavage follows an unusual pathway, termed non-hydrolytic serinolysis, in which the side chain hydroxyl group of the serine supplies its oxygen atom to form the C-terminus of the beta chain, while the remainder of the serine residue undergoes an oxidative deamination to produce ammonia and the pyruvoyl group blocking the N-terminus of the alpha chain.

It carries out the reaction S-adenosyl-L-methionine + H(+) = S-adenosyl 3-(methylsulfanyl)propylamine + CO2. Its pathway is amine and polyamine biosynthesis; S-adenosylmethioninamine biosynthesis; S-adenosylmethioninamine from S-adenosyl-L-methionine: step 1/1. In terms of biological role, S-adenosylmethionine decarboxylase is essential for the biosynthesis of spermine and spermidine. The alpha subunit contains the active site. This Dictyostelium discoideum (Social amoeba) protein is S-adenosylmethionine decarboxylase proenzyme (amd1).